An 800-amino-acid chain; its full sequence is DNA topoisomerase 4 subunit A (800 aa).

A Topo IIA-type catalytic domain is found at 31 to 495 (LPDVRDGLKP…EIEEIKIDKE (465 aa)). Y119 functions as the O-(5'-phospho-DNA)-tyrosine intermediate in the catalytic mechanism.

This sequence belongs to the type II topoisomerase GyrA/ParC subunit family. ParC type 2 subfamily. Heterotetramer composed of ParC and ParE.

It localises to the cell membrane. It carries out the reaction ATP-dependent breakage, passage and rejoining of double-stranded DNA.. In terms of biological role, topoisomerase IV is essential for chromosome segregation. It relaxes supercoiled DNA. Performs the decatenation events required during the replication of a circular DNA molecule. In Staphylococcus aureus (strain MSSA476), this protein is DNA topoisomerase 4 subunit A.